A 180-amino-acid chain; its full sequence is 5'(3')-deoxyribonucleotidase (180 aa).

Residue aspartate 9 is the Nucleophile of the active site. Residues aspartate 9, aspartate 11, and aspartate 134 each coordinate Mg(2+). The active-site Proton donor is the aspartate 11.

Belongs to the 5'(3')-deoxyribonucleotidase family. It depends on Mg(2+) as a cofactor.

Its function is as follows. Dephosphorylates nucleoside monophosphates such as the 5' and 2'(3')-phosphates of deoxyribonucleotides in vitro. The protein is 5'(3')-deoxyribonucleotidase of Clostridium acetobutylicum (strain ATCC 824 / DSM 792 / JCM 1419 / IAM 19013 / LMG 5710 / NBRC 13948 / NRRL B-527 / VKM B-1787 / 2291 / W).